We begin with the raw amino-acid sequence, 77 residues long: Large ribosomal subunit protein bL28 (77 aa).

This sequence belongs to the bacterial ribosomal protein bL28 family.

This is Large ribosomal subunit protein bL28 from Karelsulcia muelleri (strain GWSS) (Sulcia muelleri).